The primary structure comprises 821 residues: Kinetochore protein SLK19 (821 aa).

Disordered stretches follow at residues Met-1–Val-52 and Phe-99–Glu-153. Position 7 is a phosphothreonine; by CDC28 (Thr-7). Positions Gln-15–Phe-51 are enriched in polar residues. 2 stretches are compositionally biased toward basic and acidic residues: residues Phe-99 to Val-122 and Ser-136 to Glu-153. 2 positions are modified to phosphoserine: Ser-188 and Ser-189. Phosphoserine; by CDC28 is present on Ser-201. Residue Ser-216 is modified to Phosphoserine. Residue Thr-273 is modified to Phosphothreonine. 2 disordered regions span residues Pro-274–Gln-298 and Glu-699–Glu-720. Ser-283 is subject to Phosphoserine. Residues Ala-310–Lys-821 adopt a coiled-coil conformation.

In terms of processing, cleaved by ESP1 at the onset of anaphase. Post-translationally, phosphorylated by CDC5/Polo-like kinase at the onset of anaphase. Phosphorylation takes places at proximity to cleavage sites and is required for an efficient cleavage by ESP1. Phosphorylated also by CDC28.

Its subcellular location is the chromosome. The protein resides in the centromere. It is found in the kinetochore. It localises to the cytoplasm. The protein localises to the cytoskeleton. Its subcellular location is the microtubule organizing center. The protein resides in the spindle pole body. Has a role in spindle assembly and stability. Required to ensure a timely exit form mitosis. Essential to maintain pre-anaphase spindle polarity. Associates to the plus ends of the microtubules at the kinetochore and spindle midzone. A component of the FEAR (CDC14 Early Anaphase Release) network which promotes CDC14 release from the nucleolus during early anaphase. Required for proper chromosome segregation during meiosis I where it prevents premature sister chromatid separation. The chain is Kinetochore protein SLK19 (SLK19) from Saccharomyces cerevisiae (strain ATCC 204508 / S288c) (Baker's yeast).